A 622-amino-acid chain; its full sequence is Chromosomal replication initiator protein DnaA (622 aa).

A domain I, interacts with DnaA modulators region spans residues M1–A99. Residues D88–R282 are disordered. The segment at P100–A281 is domain II. 2 stretches are compositionally biased toward basic and acidic residues: residues Q118–D137 and G176–R210. Gly residues predominate over residues P250–V262. Residues R282–A498 form a domain III, AAA+ region region. 4 residues coordinate ATP: G326, G328, K329, and T330. Positions S499–G622 are domain IV, binds dsDNA.

It belongs to the DnaA family. In terms of assembly, oligomerizes as a right-handed, spiral filament on DNA at oriC.

The protein resides in the cytoplasm. Plays an essential role in the initiation and regulation of chromosomal replication. ATP-DnaA binds to the origin of replication (oriC) to initiate formation of the DNA replication initiation complex once per cell cycle. Binds the DnaA box (a 9 base pair repeat at the origin) and separates the double-stranded (ds)DNA. Forms a right-handed helical filament on oriC DNA; dsDNA binds to the exterior of the filament while single-stranded (ss)DNA is stabiized in the filament's interior. The ATP-DnaA-oriC complex binds and stabilizes one strand of the AT-rich DNA unwinding element (DUE), permitting loading of DNA polymerase. After initiation quickly degrades to an ADP-DnaA complex that is not apt for DNA replication. Binds acidic phospholipids. This is Chromosomal replication initiator protein DnaA from Streptomyces griseus subsp. griseus (strain JCM 4626 / CBS 651.72 / NBRC 13350 / KCC S-0626 / ISP 5235).